The sequence spans 65 residues: Period circadian protein (65 aa).

Residues 1–65 (EGSGGSGSSG…VTLTESLLNK (65 aa)) form a disordered region. Residues 18 to 28 (VRMSSVTNTSN) are compositionally biased toward polar residues. Positions 29–38 (AGTGTSAGDN) are enriched in low complexity. Polar residues predominate over residues 56–65 (VTLTESLLNK).

Forms a heterodimer with timeless (TIM); the complex then translocates into the nucleus. Post-translationally, phosphorylated with a circadian rhythmicity, probably by the double-time protein (dbt). Phosphorylation could be implicated in the stability of per monomer and in the formation of heterodimer per-tim.

The protein localises to the nucleus. It localises to the cytoplasm. It is found in the perinuclear region. In terms of biological role, essential for biological clock functions. Determines the period length of circadian and ultradian rhythms; an increase in PER dosage leads to shortened circadian rhythms and a decrease leads to lengthened circadian rhythms. Essential for the circadian rhythmicity of locomotor activity, eclosion behavior, and for the rhythmic component of the male courtship song that originates in the thoracic nervous system. The biological cycle depends on the rhythmic formation and nuclear localization of the TIM-PER complex. Light induces the degradation of TIM, which promotes elimination of PER. Nuclear activity of the heterodimer coordinatively regulates PER and TIM transcription through a negative feedback loop. Behaves as a negative element in circadian transcriptional loop. Does not appear to bind DNA, suggesting indirect transcriptional inhibition. This is Period circadian protein (per) from Drosophila mojavensis (Fruit fly).